The sequence spans 380 residues: Epoxyqueuosine reductase (380 aa).

The active-site Proton donor is the Asp139. In terms of domain architecture, 4Fe-4S ferredoxin-type 1 spans Ile181–Gln213. [4Fe-4S] cluster is bound by residues Cys193, Cys196, Cys199, Cys203, Cys219, Cys245, Cys248, and Cys252. The 30-residue stretch at Tyr234 to Asp263 folds into the 4Fe-4S ferredoxin-type 2 domain.

The protein belongs to the QueG family. In terms of assembly, monomer. Cob(II)alamin serves as cofactor. It depends on [4Fe-4S] cluster as a cofactor.

The protein localises to the cytoplasm. It carries out the reaction epoxyqueuosine(34) in tRNA + AH2 = queuosine(34) in tRNA + A + H2O. The protein operates within tRNA modification; tRNA-queuosine biosynthesis. Functionally, catalyzes the conversion of epoxyqueuosine (oQ) to queuosine (Q), which is a hypermodified base found in the wobble positions of tRNA(Asp), tRNA(Asn), tRNA(His) and tRNA(Tyr). In Staphylococcus aureus (strain NCTC 8325 / PS 47), this protein is Epoxyqueuosine reductase.